A 226-amino-acid chain; its full sequence is Deoxyribose-phosphate aldolase (226 aa).

D95 acts as the Proton donor/acceptor in catalysis. K157 functions as the Schiff-base intermediate with acetaldehyde in the catalytic mechanism. The Proton donor/acceptor role is filled by K186.

It belongs to the DeoC/FbaB aldolase family. DeoC type 1 subfamily.

Its subcellular location is the cytoplasm. The catalysed reaction is 2-deoxy-D-ribose 5-phosphate = D-glyceraldehyde 3-phosphate + acetaldehyde. It functions in the pathway carbohydrate degradation; 2-deoxy-D-ribose 1-phosphate degradation; D-glyceraldehyde 3-phosphate and acetaldehyde from 2-deoxy-alpha-D-ribose 1-phosphate: step 2/2. Its activity is regulated as follows. Partially inhibited by acetaldehyde. After incubation for 2, 4 and 6 hours in 300 mM acetaldehyde at 25 degrees Celsius, retains approximately 61.32%, 42.33% and 34.73% of the initial 2-deoxy-D-ribose-5-phosphate (DR5P) cleavage activity, respectively. In terms of biological role, catalyzes a reversible aldol reaction between acetaldehyde and D-glyceraldehyde 3-phosphate to generate 2-deoxy-D-ribose 5-phosphate. In vitro, DERA can catalyze the aldol condensation of chloroacetaldehyde (CHAD) and acetaldehyde (ACD), yielding (S)-4-chloro-3-hydroxybutanal ((S)-CHB), which can combine with another aldehyde to form (3R,5S)-6-chloro-2,4,6-trideoxyhexapyranose (CTeHP), a key intermediate for statin drugs. In Pseudomonas syringae pv. syringae (strain B728a), this protein is Deoxyribose-phosphate aldolase.